Reading from the N-terminus, the 369-residue chain is Putative 2-aminoethylphosphonate import ATP-binding protein PhnT (369 aa).

The ABC transporter domain occupies 19–250 (IVLDSLRVAY…PPNRFAAEFL (232 aa)). 51 to 58 (GPSGSGKT) contacts ATP.

This sequence belongs to the ABC transporter superfamily. 2-aminoethylphosphonate importer (TC 3.A.1.11.5) family.

The protein resides in the cell inner membrane. Its function is as follows. Probably part of the PhnSTUV complex (TC 3.A.1.11.5) involved in 2-aminoethylphosphonate import. Probably responsible for energy coupling to the transport system. This chain is Putative 2-aminoethylphosphonate import ATP-binding protein PhnT (phnT), found in Salmonella paratyphi A (strain ATCC 9150 / SARB42).